The chain runs to 181 residues: uncharacterized protein (181 aa).

Transmembrane regions (helical) follow at residues 24–46 (IAAV…LLNV) and 55–77 (GIVA…YILL).

The protein localises to the cell membrane. This is an uncharacterized protein from Archaeoglobus fulgidus (strain ATCC 49558 / DSM 4304 / JCM 9628 / NBRC 100126 / VC-16).